The chain runs to 170 residues: Calcineurin subunit B type 2 (170 aa).

Glycine 2 carries the N-myristoyl glycine lipid modification. 4 EF-hand domains span residues 18–46 (DEIK…FMSL), 50–85 (RHNP…FSVK), 87–122 (DEEQ…MVGN), and 128–163 (QLQQ…LEIH). Residues aspartate 31, aspartate 33, serine 35, serine 37, glutamate 42, aspartate 63, aspartate 65, aspartate 67, glutamate 69, glutamate 74, aspartate 100, aspartate 102, aspartate 104, tyrosine 106, and glutamate 111 each coordinate Ca(2+). A calcineurin A binding region spans residues 131-136 (QLVDKT). The Ca(2+) site is built by aspartate 141, aspartate 143, aspartate 145, lysine 147, and glutamate 152.

Belongs to the calcineurin regulatory subunit family. As to quaternary structure, forms a complex composed of a calmodulin-dependent catalytic subunit (also known as calcineurin A) and a regulatory Ca(2+)-binding subunit (also known as calcineurin B). There are three catalytic subunits, each encoded by a separate gene (PPP3CA, PPP3CB, and PPP3CC) and two regulatory subunits which are also encoded by separate genes (PPP3R1 and PPP3R2). Interacts with SPATA33 (via PQIIIT motif). As to expression, testis-specific.

Its subcellular location is the mitochondrion. In terms of biological role, regulatory subunit of calcineurin, a calcium-dependent, calmodulin stimulated protein phosphatase. Confers calcium sensitivity. This is Calcineurin subunit B type 2 (PPP3R2) from Homo sapiens (Human).